Reading from the N-terminus, the 529-residue chain is Putative E3 ubiquitin-protein ligase ARI4 (529 aa).

Residues methionine 1 to aspartate 22 are compositionally biased toward acidic residues. The tract at residues methionine 1–histidine 23 is disordered. Residues lysine 115 to lysine 327 form a TRIAD supradomain region. Positions 119, 122, 137, 139, 142, 145, 164, 169, 206, 212, 230, 232, 237, 240, 245, 250, 277, and 280 each coordinate Zn(2+). The RING-type 1 zinc-finger motif lies at cysteine 119 to cysteine 169. The IBR-type zinc-finger motif lies at glutamate 186–cysteine 250. An RING-type 2; atypical zinc finger spans residues cysteine 277–cysteine 305. Residue cysteine 290 is part of the active site. Residues cysteine 295, cysteine 297, cysteine 302, cysteine 305, histidine 313, and cysteine 323 each coordinate Zn(2+).

It belongs to the RBR family. Ariadne subfamily. The cofactor is Zn(2+).

It carries out the reaction [E2 ubiquitin-conjugating enzyme]-S-ubiquitinyl-L-cysteine + [acceptor protein]-L-lysine = [E2 ubiquitin-conjugating enzyme]-L-cysteine + [acceptor protein]-N(6)-ubiquitinyl-L-lysine.. It participates in protein modification; protein ubiquitination. In terms of biological role, might act as an E3 ubiquitin-protein ligase, or as part of E3 complex, which accepts ubiquitin from specific E2 ubiquitin-conjugating enzymes and then transfers it to substrates. This Arabidopsis thaliana (Mouse-ear cress) protein is Putative E3 ubiquitin-protein ligase ARI4 (ARI4).